Consider the following 340-residue polypeptide: KRR1 small subunit processome component homolog (340 aa).

In terms of domain architecture, KH spans 124-192; sequence DIIKIGNLVH…VRDIVLETMN (69 aa). Over residues 228-244 the composition is skewed to basic residues; that stretch reads KNKNISKRKQPKSKKPK. 2 disordered regions span residues 228–259 and 271–324; these read KNKNISKRKQPKSKKPKKEYTPFPPAQPESKI and NQEQ…KVDV. Residues 269-302 are a coiled coil; that stretch reads FLNQEQKQAKRNQERSAKQADAAKKQDERRNKDF. Composition is skewed to basic and acidic residues over residues 275 to 301 and 309 to 324; these read KQAKRNQERSAKQADAAKKQDERRNKD and APSRKRQAEDSSKVDV.

This sequence belongs to the KRR1 family. As to quaternary structure, monomer. Component of the ribosomal small subunit (SSU) processome.

It is found in the nucleus. The protein localises to the nucleolus. Its function is as follows. Required for 40S ribosome biogenesis. Involved in nucleolar processing of pre-18S ribosomal RNA and ribosome assembly. Binds to RNA. Required for female germline development, cell viability during eye development and for survival of dividing cells and epithelial cells during early wing disk development. The protein is KRR1 small subunit processome component homolog of Drosophila persimilis (Fruit fly).